A 155-amino-acid polypeptide reads, in one-letter code: Cyclic pyranopterin monophosphate synthase (155 aa).

Residues 75–77 (LCH) and 111–112 (ME) each bind substrate. D126 is a catalytic residue.

It belongs to the MoaC family. In terms of assembly, homohexamer; trimer of dimers.

It carries out the reaction (8S)-3',8-cyclo-7,8-dihydroguanosine 5'-triphosphate = cyclic pyranopterin phosphate + diphosphate. It functions in the pathway cofactor biosynthesis; molybdopterin biosynthesis. In terms of biological role, catalyzes the conversion of (8S)-3',8-cyclo-7,8-dihydroguanosine 5'-triphosphate to cyclic pyranopterin monophosphate (cPMP). In Corynebacterium efficiens (strain DSM 44549 / YS-314 / AJ 12310 / JCM 11189 / NBRC 100395), this protein is Cyclic pyranopterin monophosphate synthase.